The following is a 477-amino-acid chain: Peptidyl-prolyl cis-trans isomerase FKBP53 (477 aa).

2 disordered regions span residues 104–135 and 153–366; these read DYEH…EDEQ and AAAP…QVRT. Basic residues predominate over residues 264–274; it reads KSKKKKNQKEK. A compositionally biased stretch (polar residues) spans 299-321; the sequence is ISQISSNTKAQDGTANNAMSESS. The span at 322-331 shows a compositional bias: basic and acidic residues; the sequence is KTPDKSAEKK. A compositionally biased stretch (polar residues) spans 351–366; the sequence is VEKQTPADSKSSQVRT. Residues 389–477 form the PPIase FKBP-type domain; sequence GKTVSVRYIG…TFDVELINVQ (89 aa).

It belongs to the FKBP-type PPIase family. As to quaternary structure, interacts with histone H3. In terms of tissue distribution, broadly expressed in leaves, flowers, stems and roots. Detected in root apical meristem region and pollen.

It localises to the nucleus. The catalysed reaction is [protein]-peptidylproline (omega=180) = [protein]-peptidylproline (omega=0). In terms of biological role, PPIases accelerate the folding of proteins. It catalyzes the cis-trans isomerization of proline imidic peptide bonds in oligopeptides. Histone chaperone possibly involved in H3/H4 deposition to the nucleosome. Associates with 18S rDNA chromatin and negatively regulates the level of its expression. This Arabidopsis thaliana (Mouse-ear cress) protein is Peptidyl-prolyl cis-trans isomerase FKBP53 (FKBP53).